The following is a 286-amino-acid chain: Bifunctional protein FolD (286 aa).

Residues 164–166 (GRS), serine 193, and isoleucine 234 each bind NADP(+).

The protein belongs to the tetrahydrofolate dehydrogenase/cyclohydrolase family. As to quaternary structure, homodimer.

The catalysed reaction is (6R)-5,10-methylene-5,6,7,8-tetrahydrofolate + NADP(+) = (6R)-5,10-methenyltetrahydrofolate + NADPH. It catalyses the reaction (6R)-5,10-methenyltetrahydrofolate + H2O = (6R)-10-formyltetrahydrofolate + H(+). It functions in the pathway one-carbon metabolism; tetrahydrofolate interconversion. Its function is as follows. Catalyzes the oxidation of 5,10-methylenetetrahydrofolate to 5,10-methenyltetrahydrofolate and then the hydrolysis of 5,10-methenyltetrahydrofolate to 10-formyltetrahydrofolate. In Nitratidesulfovibrio vulgaris (strain ATCC 29579 / DSM 644 / CCUG 34227 / NCIMB 8303 / VKM B-1760 / Hildenborough) (Desulfovibrio vulgaris), this protein is Bifunctional protein FolD.